We begin with the raw amino-acid sequence, 56 residues long: MADSTATCIDIILAIILPPLGVFFKFGCGIEFWICLLLTFFGYLPGIIYAVWVITK.

The next 2 membrane-spanning stretches (helical) occupy residues 11–31 (IILAIILPPLGVFFKFGCGIE) and 34–54 (ICLLLTFFGYLPGIIYAVWVI).

This sequence belongs to the UPF0057 (PMP3) family. In terms of tissue distribution, expressed in shoot of cold stressed seedlings.

The protein localises to the membrane. In terms of biological role, plays a role in the regulation of membrane potential. Could mediate a proton leak. This Oryza sativa subsp. japonica (Rice) protein is Hydrophobic protein LTI6A (LTI6A).